A 283-amino-acid polypeptide reads, in one-letter code: MTVQTSKNPQVDIAEDNAFFPSEYSLSQYTSPVSDLDGVDYPKPYRGKHKILVIAADERYLPTDNGKLFSTGNHPIETLLPLYHLHAAGFEFEVATISGLMTKFEYWAMPHKDEKVMPFFEQHKSLFRNPKKLADVVASLNADSEYAAIFVPGGHGALIGLPESQDVAAALQWAIKNDRFVISLCHGPAAFLALRHGDNPLNGYSICAFPDAADKQTPEIGYMPGHLTWYFGEELKKMGMNIINDDITGRVHKDRKLLTGDSPFAANALGKLAAQEMLAAYAG.

The Zn(2+) site is built by histidine 86, glutamate 91, and histidine 123. Residue cysteine 185 is the Nucleophile of the active site.

It belongs to the peptidase C56 family. HchA subfamily. Homodimer.

Its subcellular location is the cytoplasm. It carries out the reaction N(omega)-(1-hydroxy-2-oxopropyl)-L-arginyl-[protein] + H2O = lactate + L-arginyl-[protein] + H(+). It catalyses the reaction N(6)-(1-hydroxy-2-oxopropyl)-L-lysyl-[protein] + H2O = lactate + L-lysyl-[protein] + H(+). The catalysed reaction is S-(1-hydroxy-2-oxopropyl)-L-cysteinyl-[protein] + H2O = lactate + L-cysteinyl-[protein] + H(+). The enzyme catalyses N(omega)-(1-hydroxy-2-oxoethyl)-L-arginyl-[protein] + H2O = L-arginyl-[protein] + glycolate + H(+). It carries out the reaction N(6)-(1-hydroxy-2-oxoethyl)-L-lysyl-[protein] + H2O = glycolate + L-lysyl-[protein] + H(+). It catalyses the reaction S-(1-hydroxy-2-oxoethyl)-L-cysteinyl-[protein] + H2O = glycolate + L-cysteinyl-[protein] + H(+). The catalysed reaction is N(2)-(1-hydroxy-2-oxopropyl)-dGTP + H2O = lactate + dGTP + H(+). The enzyme catalyses N(2)-(1-hydroxy-2-oxopropyl)-GTP + H2O = lactate + GTP + H(+). It carries out the reaction N(2)-(1-hydroxy-2-oxopropyl)-GDP + H2O = lactate + GDP + H(+). It catalyses the reaction N(2)-(1-hydroxy-2-oxopropyl)-GMP + H2O = lactate + GMP + H(+). The catalysed reaction is N(2)-(1-hydroxy-2-oxoethyl)-dGTP + H2O = dGTP + glycolate + H(+). The enzyme catalyses N(2)-(1-hydroxy-2-oxoethyl)-GTP + H2O = glycolate + GTP + H(+). It carries out the reaction N(2)-(1-hydroxy-2-oxoethyl)-GDP + H2O = glycolate + GDP + H(+). It catalyses the reaction N(2)-(1-hydroxy-2-oxoethyl)-GMP + H2O = glycolate + GMP + H(+). The catalysed reaction is an N(2)-(1-hydroxy-2-oxopropyl)-guanosine in RNA + H2O = a guanosine in RNA + lactate + H(+). The enzyme catalyses an N(2)-(1-hydroxy-2-oxopropyl)-2'-deoxyguanosine in DNA + H2O = a 2'-deoxyguanosine in DNA + lactate + H(+). It carries out the reaction an N(2)-(1-hydroxy-2-oxoethyl)-guanosine in RNA + H2O = a guanosine in RNA + glycolate + H(+). It catalyses the reaction an N(2)-(1-hydroxy-2-oxoethyl)-2'-deoxyguanosine in DNA + H2O = a 2'-deoxyguanosine in DNA + glycolate + H(+). Its function is as follows. Protein and nucleotide deglycase that catalyzes the deglycation of the Maillard adducts formed between amino groups of proteins or nucleotides and reactive carbonyl groups of glyoxals. Thus, functions as a protein deglycase that repairs methylglyoxal- and glyoxal-glycated proteins, and releases repaired proteins and lactate or glycolate, respectively. Deglycates cysteine, arginine and lysine residues in proteins, and thus reactivates these proteins by reversing glycation by glyoxals. Acts on early glycation intermediates (hemithioacetals and aminocarbinols), preventing the formation of Schiff bases and advanced glycation endproducts (AGE). Also functions as a nucleotide deglycase able to repair glycated guanine in the free nucleotide pool (GTP, GDP, GMP, dGTP) and in DNA and RNA. Is thus involved in a major nucleotide repair system named guanine glycation repair (GG repair), dedicated to reversing methylglyoxal and glyoxal damage via nucleotide sanitization and direct nucleic acid repair. Plays an important role in protecting cells from carbonyl stress. This is Protein/nucleic acid deglycase HchA from Escherichia coli (strain K12 / MC4100 / BW2952).